The chain runs to 24 residues: Formate ester dehydrogenase gamma chain (24 aa).

Heterotrimer composed of an alpha, a beta and a gamma chain.

This chain is Formate ester dehydrogenase gamma chain, found in Amycolatopsis methanolica.